The chain runs to 575 residues: Septation ring formation regulator EzrA (575 aa).

The Extracellular segment spans residues 1–8 (MSNGQLIY). A helical transmembrane segment spans residues 9 to 27 (LMVAIAVILVLAYVVAIFL). At 28–575 (RKRNEGRLEA…YEKTRETIRF (548 aa)) the chain is on the cytoplasmic side. Coiled coils occupy residues 110-191 (QIDQ…FVTL), 265-301 (LYEAFKKNQENIRQLELDNAEYENGQAQEEINALYDI), 354-416 (VRRI…IEKD), and 456-526 (TASN…IQEA).

It belongs to the EzrA family.

The protein resides in the cell membrane. Functionally, negative regulator of FtsZ ring formation; modulates the frequency and position of FtsZ ring formation. Inhibits FtsZ ring formation at polar sites. Interacts either with FtsZ or with one of its binding partners to promote depolymerization. The sequence is that of Septation ring formation regulator EzrA from Streptococcus pneumoniae (strain JJA).